The following is an 88-amino-acid chain: Apolipoprotein C-I (88 aa).

Residues 1-26 (MRLFLSLPVLVVVLAMVLEGPAPTQA) form the signal peptide.

The protein belongs to the apolipoprotein C1 family.

It is found in the secreted. Inhibitor of lipoprotein binding to the low density lipoprotein (LDL) receptor, LDL receptor-related protein, and very low density lipoprotein (VLDL) receptor. Associates with high density lipoproteins (HDL) and the triacylglycerol-rich lipoproteins in the plasma and makes up about 10% of the protein of the VLDL and 2% of that of HDL. Appears to interfere directly with fatty acid uptake and is also the major plasma inhibitor of cholesteryl ester transfer protein (CETP). Binds free fatty acids and reduces their intracellular esterification. Modulates the interaction of APOE with beta-migrating VLDL and inhibits binding of beta-VLDL to the LDL receptor-related protein. The sequence is that of Apolipoprotein C-I (APOC1) from Mirounga angustirostris (Northern elephant seal).